The chain runs to 597 residues: Elongation factor 4 (597 aa).

The tr-type G domain maps to 2 to 184; it reads QHIRNFSIIA…TIVARVPAPQ (183 aa). Residues 14 to 19 and 131 to 134 contribute to the GTP site; these read DHGKST and NKMD.

It belongs to the TRAFAC class translation factor GTPase superfamily. Classic translation factor GTPase family. LepA subfamily.

It is found in the cell inner membrane. The enzyme catalyses GTP + H2O = GDP + phosphate + H(+). Required for accurate and efficient protein synthesis under certain stress conditions. May act as a fidelity factor of the translation reaction, by catalyzing a one-codon backward translocation of tRNAs on improperly translocated ribosomes. Back-translocation proceeds from a post-translocation (POST) complex to a pre-translocation (PRE) complex, thus giving elongation factor G a second chance to translocate the tRNAs correctly. Binds to ribosomes in a GTP-dependent manner. This is Elongation factor 4 from Bordetella petrii (strain ATCC BAA-461 / DSM 12804 / CCUG 43448).